The sequence spans 359 residues: G-protein coupled receptor 15 (359 aa).

Residues 1–33 (MDPEETSVYLDYYYATSPNPDIRETHSHVPYTS) are Extracellular-facing. The helical transmembrane segment at 34 to 54 (VFLPVFYTAVFLTGVLGNLVL) threads the bilayer. At 55–69 (MGALHFKPGSRRLID) the chain is on the cytoplasmic side. A helical membrane pass occupies residues 70 to 90 (IFIINLAASDFIFLVTLPLWV). Residues 91–120 (DKEASLGLWRTGSFLCKGSSYMISVNMHCS) lie on the Extracellular side of the membrane. A helical transmembrane segment spans residues 121–141 (VFLLTCMSVDRYLAIVCPVVS). The Cytoplasmic segment spans residues 142–149 (RKFRRTDC). Residues 150 to 170 (AYVVCASIWFISCLLGLPTLL) form a helical membrane-spanning segment. Residues 171–192 (SRELTLIDDKPYCAEKKATPLK) are Extracellular-facing. A helical transmembrane segment spans residues 193–213 (LIWSLVALIFTFFVPLLNIVT). The Cytoplasmic portion of the chain corresponds to 214–239 (CYCCIARKLCAHYQQSGRHNKKLKKS). Residues 240 to 260 (IKIILIVVAAFLVSWLPFNTF) form a helical membrane-spanning segment. The Extracellular portion of the chain corresponds to 261–283 (KLLAIVSGLQERYFPSAMLQLGM). A helical transmembrane segment spans residues 284–304 (EVSGPLAFANSCVNPFIYYIF). At 305-359 (DSYIRRAIVHCLCPCLKNYDFGSSTETSDSHLTKALSTFIHAEDFTRRRKRSVSL) the chain is on the cytoplasmic side. Ser358 carries the phosphoserine modification.

This sequence belongs to the G-protein coupled receptor 1 family. Interacts with adapter YWHAE; this interaction promotes ER-to-Golgi transport of GPR15. Phosphorylation is necessary for YWHAE binding and efficient surface expression. In terms of processing, O-glycosylated. Sialylated O-glycans in the N-terminal tail inhibits binding of GPR15LG. Post-translationally, sulfation is required for efficient binding of GPR15LG.

The protein localises to the cell membrane. Functionally, g protein-coupled receptor that plays an important role in immune homeostasis. Acts via its natural ligand GPR15LG, a chemokine-like polypeptide strongly expressed in gastrointestinal tissues. GPR15-GPR15LG signaling axis regulates intestinal homeostasis and inflammation through the migration of immune cells. Controls thereby the specific homing of T-cells, particularly FOXP3+ regulatory T-cells (Tregs), to the large intestine lamina propria. Also required for skin localization of thymus-derived dendritic epidermal T-cells. Plays an important role in mediating cytoprotective function as well as angiogenesis of thrombomodulin. Mechanistically, preferentially signals through the Gi/o pathway to inhibit adenylate cyclase activity and activate a phosphatidylinositol-calcium second messenger system that regulates the release of Ca(2+) ions from intracellular stores. The polypeptide is G-protein coupled receptor 15 (GPR15) (Macaca fascicularis (Crab-eating macaque)).